A 340-amino-acid chain; its full sequence is Probable dual-specificity RNA methyltransferase RlmN (340 aa).

E93 acts as the Proton acceptor in catalysis. The Radical SAM core domain occupies 99–327 (TAKRLTVCVS…VSVRYSRGLE (229 aa)). A disulfide bond links C106 and C332. The [4Fe-4S] cluster site is built by C113, C117, and C120. Residues 160-161 (GE), S190, 213-215 (SLH), and N289 contribute to the S-adenosyl-L-methionine site. The active-site S-methylcysteine intermediate is C332.

Belongs to the radical SAM superfamily. RlmN family. [4Fe-4S] cluster is required as a cofactor.

The protein resides in the cytoplasm. The enzyme catalyses adenosine(2503) in 23S rRNA + 2 reduced [2Fe-2S]-[ferredoxin] + 2 S-adenosyl-L-methionine = 2-methyladenosine(2503) in 23S rRNA + 5'-deoxyadenosine + L-methionine + 2 oxidized [2Fe-2S]-[ferredoxin] + S-adenosyl-L-homocysteine. It catalyses the reaction adenosine(37) in tRNA + 2 reduced [2Fe-2S]-[ferredoxin] + 2 S-adenosyl-L-methionine = 2-methyladenosine(37) in tRNA + 5'-deoxyadenosine + L-methionine + 2 oxidized [2Fe-2S]-[ferredoxin] + S-adenosyl-L-homocysteine. In terms of biological role, specifically methylates position 2 of adenine 2503 in 23S rRNA and position 2 of adenine 37 in tRNAs. This Rippkaea orientalis (strain PCC 8801 / RF-1) (Cyanothece sp. (strain PCC 8801)) protein is Probable dual-specificity RNA methyltransferase RlmN.